Consider the following 328-residue polypeptide: Glucokinase (328 aa).

Position 16–21 (16–21) interacts with ATP; it reads ADIGGT.

The protein belongs to the bacterial glucokinase family.

It localises to the cytoplasm. It carries out the reaction D-glucose + ATP = D-glucose 6-phosphate + ADP + H(+). This is Glucokinase from Neisseria meningitidis serogroup C (strain 053442).